We begin with the raw amino-acid sequence, 470 residues long: 6-phosphofructo-2-kinase/fructose-2,6-bisphosphatase (470 aa).

Residues 1–249 (MAAVASGQLT…VYYLMNTHVT (249 aa)) are 6-phosphofructo-2-kinase. The residue at position 31 (S31) is a Phosphoserine; by PKA. 47–55 (GLRRPGKTY) is an ATP binding site. Beta-D-fructose 6-phosphate-binding residues include R80 and R104. D130 is an active-site residue. The beta-D-fructose 6-phosphate site is built by T132 and R138. C160 is a catalytic residue. An ATP-binding site is contributed by 169 to 174 (NIKQVK). Residues K174, R195, and Y199 each coordinate beta-D-fructose 6-phosphate. Residues 250-469 (PRAIYLSRHG…AEALVTVPEH (220 aa)) form a fructose-2,6-bisphosphatase region. R257 serves as a coordination point for beta-D-fructose 2,6-bisphosphate. The Tele-phosphohistidine intermediate role is filled by H258. The beta-D-fructose 2,6-bisphosphate site is built by N264 and G270. E327 serves as the catalytic Proton donor/acceptor. 6 residues coordinate beta-D-fructose 2,6-bisphosphate: Y338, R352, K356, Y367, Q393, and R397. Residue 349–352 (FALR) participates in ATP binding. ATP contacts are provided by residues 393–397 (QAVMR) and Y429.

In the C-terminal section; belongs to the phosphoglycerate mutase family. Homodimer. As to expression, liver.

The catalysed reaction is beta-D-fructose 2,6-bisphosphate + H2O = beta-D-fructose 6-phosphate + phosphate. It carries out the reaction beta-D-fructose 6-phosphate + ATP = beta-D-fructose 2,6-bisphosphate + ADP + H(+). Phosphorylation results in inhibition of the kinase activity. In terms of biological role, synthesis and degradation of fructose 2,6-bisphosphate. This Gallus gallus (Chicken) protein is 6-phosphofructo-2-kinase/fructose-2,6-bisphosphatase.